A 1957-amino-acid polypeptide reads, in one-letter code: Chromatin modification-related protein EAF1 A (1957 aa).

Disordered regions lie at residues 108 to 208, 261 to 287, 323 to 373, and 449 to 469; these read ASPH…TDLV, NRVSSNSLNTKVDGEPVVRESTAGSKT, GGSP…SHAN, and NQSHRSTAEMQTKEKSSETEK. Basic and acidic residues predominate over residues 140–151; the sequence is SENKSVEGERNL. 3 stretches are compositionally biased toward polar residues: residues 261 to 270, 333 to 342, and 355 to 372; these read NRVSSNSLNT, GQKNSSTQLN, and TNRGATGTNGLESESSHA. The HSA domain maps to 563–641; it reads CGTAPVEVRE…LSNAILQFWS (79 aa). Disordered stretches follow at residues 833–909 and 928–950; these read GSNS…AVQK and AETSGRPKKKKKTHQGSAYDQTW. Residues 884–898 are compositionally biased toward polar residues; that stretch reads TDASSGDTSSFQDEY. The 57-residue stretch at 1049–1105 folds into the SANT domain; the sequence is SGNPWSLFEDQALVVLVHDMGPNWELISDAMNSTLKIKCIYRNPTECKDRHKILMDK. 7 disordered regions span residues 1107-1131, 1282-1314, 1344-1367, 1449-1644, 1687-1768, 1804-1840, and 1876-1957; these read AGDGADSAEDSGNSQSYPSTLPGIP, TPVLPTSGAHPSTPGSSGVVLSNNLPTTSGLQS, LSGRNLQQPSLSTPAAVSGSDRGH, QGNS…QQLN, PVRP…IAPA, ELSKKSQAERMPRVPQSVTNTTQTVSMGTTKGMPQAS, and SSNT…TKVE. Polar residues-rich tracts occupy residues 1116 to 1125, 1290 to 1314, 1344 to 1358, 1459 to 1472, 1479 to 1492, and 1501 to 1510; these read DSGNSQSYPS, AHPSTPGSSGVVLSNNLPTTSGLQS, LSGRNLQQPSLSTPA, SNLSSGFTNQTTPV, LSQQHQMSPQSHVL, and QSPSQATGAQ. Composition is skewed to low complexity over residues 1523-1534 and 1545-1562; these read QRYLQQQQQQQQ and VQQPQGSSVSSSPQNSPQ. Pro residues predominate over residues 1563 to 1579; sequence TQPPVSPQPLSMPPVSP. Polar residues-rich tracts occupy residues 1582 to 1595, 1604 to 1618, 1635 to 1644, 1691 to 1722, and 1734 to 1758; these read NINAMAQQKPQKSQ, SPQSGTSGVNNQAGK, RQPTQGQQLN, DQQSSVGTTTSTNLQSKPFVSPLSSNHSQQLP, and QQQMQLHSDNSIQGQSSPATPCNIL. Low complexity predominate over residues 1759-1768; that stretch reads STSSPSIAPA. Positions 1805–1815 are enriched in basic and acidic residues; that stretch reads LSKKSQAERMP. 2 stretches are compositionally biased toward polar residues: residues 1819–1832 and 1876–1894; these read QSVTNTTQTVSMGT and SSNTDSAGNDPVSTPNQGL. Composition is skewed to basic and acidic residues over residues 1913 to 1922 and 1932 to 1942; these read SEEKRPKLPE and LASEEQPHLEE.

This sequence belongs to the EAF1 family. Component of the NuA4 histone acetyltransferase complex. Interacts with ARP4 and SWC4, and (via HSA domain) with TAF14 and TAF14B. As to expression, expressed in leaves.

The protein localises to the nucleus. Its function is as follows. Component of the NuA4 histone acetyltransferase complex which is involved in transcriptional activation of selected genes principally by acetylation of nucleosomal histone H4 and H2A. In Arabidopsis thaliana (Mouse-ear cress), this protein is Chromatin modification-related protein EAF1 A (EAF1A).